The sequence spans 270 residues: Phosphatidylglycerol--prolipoprotein diacylglyceryl transferase (270 aa).

4 helical membrane passes run 19–39 (FPVYWYGIIIGTGVLLGLWLA), 56–76 (LVLIAVPIAILFARMYYVIFE), 92–112 (QGGLAIHGGLIGAVITGILFA), and 116–136 (GVSFWKLADIAAPSILLGQAI). R138 provides a ligand contact to a 1,2-diacyl-sn-glycero-3-phospho-(1'-sn-glycerol). The next 3 membrane-spanning stretches (helical) occupy residues 178–198 (HPTFLYESLWNFAGVILLLAL), 206–226 (GELFFTYLIWYSIGRFFVEGL), and 236–256 (LRIAQVMSIGLVVISIIFIIV).

This sequence belongs to the Lgt family.

The protein localises to the cell membrane. The catalysed reaction is L-cysteinyl-[prolipoprotein] + a 1,2-diacyl-sn-glycero-3-phospho-(1'-sn-glycerol) = an S-1,2-diacyl-sn-glyceryl-L-cysteinyl-[prolipoprotein] + sn-glycerol 1-phosphate + H(+). It participates in protein modification; lipoprotein biosynthesis (diacylglyceryl transfer). Functionally, catalyzes the transfer of the diacylglyceryl group from phosphatidylglycerol to the sulfhydryl group of the N-terminal cysteine of a prolipoprotein, the first step in the formation of mature lipoproteins. This Bacillus cereus (strain ZK / E33L) protein is Phosphatidylglycerol--prolipoprotein diacylglyceryl transferase.